The chain runs to 243 residues: Urease accessory protein UreF 2 (243 aa).

It belongs to the UreF family. In terms of assembly, ureD, UreF and UreG form a complex that acts as a GTP-hydrolysis-dependent molecular chaperone, activating the urease apoprotein by helping to assemble the nickel containing metallocenter of UreC. The UreE protein probably delivers the nickel.

It localises to the cytoplasm. Required for maturation of urease via the functional incorporation of the urease nickel metallocenter. Its function is as follows. Disrupting the ure2 operon has no effect on urease activity or pathogen survival in BALB/c mice when administered orally. This Brucella abortus (strain 2308) protein is Urease accessory protein UreF 2.